The following is a 154-amino-acid chain: uncharacterized protein (154 aa).

The next 4 membrane-spanning stretches (helical) occupy residues 20 to 42, 62 to 84, 91 to 109, and 113 to 132; these read FRLF…GQFG, FFGY…AVLL, ALGA…LINY, and IGVQ…LLWM.

Its subcellular location is the cell membrane. This is an uncharacterized protein from Bacillus subtilis (strain 168).